Consider the following 670-residue polypeptide: Probable potassium transport system protein Kup 1 (670 aa).

13 helical membrane passes run 14–34 (GAGFIIAMGIVYGDIGTSPLY), 58–78 (LSLIIWTLTLITTVKYVWIAL), 101–121 (WLIIPAMIGGAALLSDGALTP), 147–167 (LPIVIITLAILAVLFLIQRFG), 175–195 (FGPVMFIWFSFLGITGLINLF), 196–216 (GDFSVLQAINPYWAIHLLLSP), 220–240 (AGIFVLGSVFLATTGAEALYS), 252–272 (VSWPFVKVCIILSYCGQGAWL), 294–314 (LIIFSVILATLAAIIASQALI), 345–365 (LYIPAVNLGLWLAASFIVVYF), 374–394 (AYGLAITVTMLMTTTLLTVYL), 403–423 (VLVGLFFTVFIFIEGLFFAAS), and 427–447 (FMHGGYVVVIIAAMILFVMAI).

The protein belongs to the HAK/KUP transporter (TC 2.A.72) family.

The protein resides in the cell membrane. The enzyme catalyses K(+)(in) + H(+)(in) = K(+)(out) + H(+)(out). In terms of biological role, transport of potassium into the cell. Likely operates as a K(+):H(+) symporter. This Lactococcus lactis subsp. lactis (strain IL1403) (Streptococcus lactis) protein is Probable potassium transport system protein Kup 1.